Here is a 212-residue protein sequence, read N- to C-terminus: Regulatory protein RecX (212 aa).

The protein belongs to the RecX family.

The protein localises to the cytoplasm. Functionally, modulates RecA activity. This chain is Regulatory protein RecX, found in Clostridium perfringens (strain SM101 / Type A).